Consider the following 111-residue polypeptide: Flagellar hook-basal body complex protein FliE (111 aa).

It belongs to the FliE family.

It is found in the bacterial flagellum basal body. The protein is Flagellar hook-basal body complex protein FliE of Clostridium acetobutylicum (strain ATCC 824 / DSM 792 / JCM 1419 / IAM 19013 / LMG 5710 / NBRC 13948 / NRRL B-527 / VKM B-1787 / 2291 / W).